The following is a 213-amino-acid chain: UPF0319 protein HAPS_0727 (213 aa).

Positions 1 to 21 are cleaved as a signal peptide; the sequence is MKLGKIALAMTALIAGTTAFA.

Belongs to the UPF0319 family.

In Glaesserella parasuis serovar 5 (strain SH0165) (Haemophilus parasuis), this protein is UPF0319 protein HAPS_0727.